Here is a 1133-residue protein sequence, read N- to C-terminus: uncharacterized protein (1133 aa).

Disordered regions lie at residues 33-83 (QFED…NSSS), 305-629 (PVSN…NSNS), 679-723 (GKLD…SVKR), and 736-817 (IESP…SEEV). Residues 39–83 (NNNNSNNNNNNNNSNNNNSNNNENINRKTGSTLLSSSTSQLNSSS) are compositionally biased toward low complexity. The segment at residues 40 to 308 (NNNSNNNNNN…GHPTCNPVSN (269 aa)) is a DNA-binding region (NDT80). The span at 305–316 (PVSNNPSTPGTP) shows a compositional bias: polar residues. Residues 317-384 (ISNFDSSNNN…NNNSSGNSSS (68 aa)) are compositionally biased toward low complexity. The segment covering 401–417 (INSLSNHNSPHLTPIQY) has biased composition (polar residues). Low complexity predominate over residues 418-452 (NNNNNNSNNNSNNNNNNNNNNNNSNNNNNNSNNNN). Polar residues predominate over residues 453–470 (HQFQSNNRIFKGNLSNPF). Low complexity-rich tracts occupy residues 473-615 (NYSQ…GNNS) and 686-714 (NNSN…NNNN). Polar residues predominate over residues 736–747 (IESPQSYISSPT). Pro residues predominate over residues 757-771 (QPQPQPQPQPQPQPQ). A compositionally biased stretch (low complexity) spans 772 to 808 (PQSQSQSQSQSQSQSQSQSQSQSQPIQQIVQQQLSSP). One can recognise a Peptidase S74 domain in the interval 909–1020 (SDKRVKENVK…KKVDNVCMEL (112 aa)). The chain crosses the membrane as a helical span at residues 1055–1075 (IFIGIGVFTLFVIFGLVAVSI). A disordered region spans residues 1107-1133 (SGSNSCYDSSSNSAIDTTTSTGSGSIK).

Its subcellular location is the membrane. This is an uncharacterized protein from Dictyostelium discoideum (Social amoeba).